The sequence spans 207 residues: MSDRILVLVRHGQSEWNLKNLFTGWRDPDLTEQGVSEAKRAGALLKAEGLKFDVAFTSDLTRAQKTLGLILGEMGQEGVPTTRNVALNERDYGDLAGLNKDDARAKWGDDQVHIWRRSYDIAPPGGESLRDTVARTLPYYVQEILPCVLRGQTTLVAAHGNSLRALIMTLEKLSPEGIMKRELNTGAPIVYKLAADSTVAEKRDLVA.

Residues 10–17, 23–24, Arg62, 89–92, Lys100, 116–117, and 160–161 each bind substrate; these read RHGQSEWN, TG, ERDY, RR, and GN. The active-site Tele-phosphohistidine intermediate is the His11. Glu89 serves as the catalytic Proton donor/acceptor.

This sequence belongs to the phosphoglycerate mutase family. BPG-dependent PGAM subfamily. In terms of assembly, homodimer.

It catalyses the reaction (2R)-2-phosphoglycerate = (2R)-3-phosphoglycerate. Its pathway is carbohydrate degradation; glycolysis; pyruvate from D-glyceraldehyde 3-phosphate: step 3/5. Functionally, catalyzes the interconversion of 2-phosphoglycerate and 3-phosphoglycerate. The sequence is that of 2,3-bisphosphoglycerate-dependent phosphoglycerate mutase from Xanthobacter autotrophicus (strain ATCC BAA-1158 / Py2).